We begin with the raw amino-acid sequence, 61 residues long: Putative neurotoxin-A (61 aa).

Positions 1–19 are cleaved as a signal peptide; that stretch reads MKTVCGVFMVLLALTVLLA. 3 disulfide bridges follow: C31–C50, C36–C55, and C40–C57.

The protein belongs to the short scorpion toxin superfamily. In terms of tissue distribution, expressed by the venom gland.

It localises to the secreted. The sequence is that of Putative neurotoxin-A from Lychas mucronatus (Chinese swimming scorpion).